Here is a 122-residue protein sequence, read N- to C-terminus: Large ribosomal subunit protein uL14 (122 aa).

It belongs to the universal ribosomal protein uL14 family. Part of the 50S ribosomal subunit. Forms a cluster with proteins L3 and L19. In the 70S ribosome, L14 and L19 interact and together make contacts with the 16S rRNA in bridges B5 and B8.

Functionally, binds to 23S rRNA. Forms part of two intersubunit bridges in the 70S ribosome. The protein is Large ribosomal subunit protein uL14 of Rickettsia africae (strain ESF-5).